Reading from the N-terminus, the 188-residue chain is PRA1 family protein 3 (188 aa).

M1 carries the N-acetylmethionine modification. Residues 1–35 (MDVNIAPLRAWDDFFPGSDRFARPDFRDISKWNNR) are Cytoplasmic-facing. A run of 2 helical transmembrane segments spans residues 36-56 (VVSN…MMIS) and 57-77 (VVGF…VLVF). The Cytoplasmic segment spans residues 78–93 (TGFVWAAHNKDILRRM). 2 consecutive transmembrane segments (helical) span residues 94-114 (KKQY…FLIS) and 115-135 (LFGG…LMFI). The required for homodimer formation and heterodimer formation with ARL6IP1 stretch occupies residues 103–117 (MVVMLASYFLISLFG). The Cytoplasmic segment spans residues 136 to 188 (HASLRLRNLKNKLENKMEEIGLKRTPMGIVLDALEQQEETITKFSDYISKMKE). The segment at 136 to 188 (HASLRLRNLKNKLENKMEEIGLKRTPMGIVLDALEQQEETITKFSDYISKMKE) is targeting to endoplasmic reticulum membrane.

The protein belongs to the PRA1 family. In terms of assembly, homodimer. Heterodimer with ARL6IP1. Forms multimers. Interacts with ARL6. Interacts with prenylated RAB1A and RAB3A. Interacts with SLC1A1/EAAC1. Interacts with RTN2 (via first transmembrane domain). Does not interact with VAMP1, VAMP2 or VAMP3.

The protein resides in the endoplasmic reticulum membrane. It localises to the cell membrane. Its subcellular location is the cytoplasm. It is found in the cytoskeleton. In terms of biological role, regulates intracellular concentrations of taurine and glutamate. Negatively modulates SLC1A1/EAAC1 glutamate transport activity by decreasing its affinity for glutamate in a PKC activity-dependent manner. Plays a role in the retention of SLC1A1/EAAC1 in the endoplasmic reticulum. The chain is PRA1 family protein 3 (ARL6IP5) from Bos taurus (Bovine).